Reading from the N-terminus, the 216-residue chain is Holliday junction branch migration complex subunit RuvA (216 aa).

Residues 1-64 are domain I; that stretch reads MISFIKGVLI…EDAQQLYGFK (64 aa). The domain II stretch occupies residues 65 to 143; it reads SKVDKKVFQE…KMANEIYAQT (79 aa). The flexible linker stretch occupies residues 144 to 163; it reads SGTTTTSQDSQAQQAPTSAV. The tract at residues 164–216 is domain III; sequence LANSIFNESVDALLALGYKQKDAEKMSRSAMGDATTAAEVIRKALQGSIRSKR.

This sequence belongs to the RuvA family. Homotetramer. Forms an RuvA(8)-RuvB(12)-Holliday junction (HJ) complex. HJ DNA is sandwiched between 2 RuvA tetramers; dsDNA enters through RuvA and exits via RuvB. An RuvB hexamer assembles on each DNA strand where it exits the tetramer. Each RuvB hexamer is contacted by two RuvA subunits (via domain III) on 2 adjacent RuvB subunits; this complex drives branch migration. In the full resolvosome a probable DNA-RuvA(4)-RuvB(12)-RuvC(2) complex forms which resolves the HJ.

The protein resides in the cytoplasm. In terms of biological role, the RuvA-RuvB-RuvC complex processes Holliday junction (HJ) DNA during genetic recombination and DNA repair, while the RuvA-RuvB complex plays an important role in the rescue of blocked DNA replication forks via replication fork reversal (RFR). RuvA specifically binds to HJ cruciform DNA, conferring on it an open structure. The RuvB hexamer acts as an ATP-dependent pump, pulling dsDNA into and through the RuvAB complex. HJ branch migration allows RuvC to scan DNA until it finds its consensus sequence, where it cleaves and resolves the cruciform DNA. The sequence is that of Holliday junction branch migration complex subunit RuvA from Francisella tularensis subsp. novicida (strain U112).